The chain runs to 239 residues: uncharacterized protein (239 aa).

4 helical membrane-spanning segments follow: residues 9 to 29 (LAIYPIAYVLWGGLMWYSQII), 65 to 85 (IIYLYGFSSMIIGGIAYYLFI), 94 to 114 (IILIDLALGWLFAGLIYTFVV), and 167 to 187 (IYFALAILIPISTLIMGMHWI).

Its subcellular location is the cell membrane. This is an uncharacterized protein from Methanocaldococcus jannaschii (strain ATCC 43067 / DSM 2661 / JAL-1 / JCM 10045 / NBRC 100440) (Methanococcus jannaschii).